We begin with the raw amino-acid sequence, 262 residues long: Tryptophan synthase alpha chain (262 aa).

Residues E49 and D60 each act as proton acceptor in the active site.

This sequence belongs to the TrpA family. Tetramer of two alpha and two beta chains.

The catalysed reaction is (1S,2R)-1-C-(indol-3-yl)glycerol 3-phosphate + L-serine = D-glyceraldehyde 3-phosphate + L-tryptophan + H2O. The protein operates within amino-acid biosynthesis; L-tryptophan biosynthesis; L-tryptophan from chorismate: step 5/5. Its function is as follows. The alpha subunit is responsible for the aldol cleavage of indoleglycerol phosphate to indole and glyceraldehyde 3-phosphate. The polypeptide is Tryptophan synthase alpha chain (Aquifex aeolicus (strain VF5)).